Consider the following 296-residue polypeptide: Antisense-enhancing sequence 1 (296 aa).

Glutamate 47 is an active-site residue.

This sequence belongs to the PhzF family.

Functionally, may have isomerase activity. Enhances target gene silencing when coexpressed with antisense RNA. The polypeptide is Antisense-enhancing sequence 1 (aes1) (Schizosaccharomyces pombe (strain 972 / ATCC 24843) (Fission yeast)).